The following is a 407-amino-acid chain: Phosphopentomutase (407 aa).

Mn(2+)-binding residues include D10, D306, H311, D347, H348, and H359.

This sequence belongs to the phosphopentomutase family. The cofactor is Mn(2+).

It localises to the cytoplasm. It carries out the reaction 2-deoxy-alpha-D-ribose 1-phosphate = 2-deoxy-D-ribose 5-phosphate. The catalysed reaction is alpha-D-ribose 1-phosphate = D-ribose 5-phosphate. It functions in the pathway carbohydrate degradation; 2-deoxy-D-ribose 1-phosphate degradation; D-glyceraldehyde 3-phosphate and acetaldehyde from 2-deoxy-alpha-D-ribose 1-phosphate: step 1/2. Isomerase that catalyzes the conversion of deoxy-ribose 1-phosphate (dRib-1-P) and ribose 1-phosphate (Rib-1-P) to deoxy-ribose 5-phosphate (dRib-5-P) and ribose 5-phosphate (Rib-5-P), respectively. This Serratia proteamaculans (strain 568) protein is Phosphopentomutase.